The chain runs to 258 residues: MLILISPAKTLDYQSPLTTTRYTLPELLDNAQQLIHEARKLTPPQISSLMRISDKLAGINAARFHDWQPNFTPENARQAILAFKGDVYTGLQAETFSEDDFDFAQQHLRMLSGLYGVLRPLDLMQPYRLEMGIRLENARGKDLYQFWGDIITNKLNEALAAQGDNVVINLASDEYFKSVKPKKLNAEIIKPVFLDEKNGKFKIISFYAKKARGLMSRFIIENRLTKPEQLTGFNSEGYFFDEASSSNGELVFKRYEQR.

This sequence belongs to the UPF0246 family.

This is UPF0246 protein YaaA from Escherichia coli O6:K15:H31 (strain 536 / UPEC).